Here is a 246-residue protein sequence, read N- to C-terminus: Isoamyl acetate-hydrolyzing esterase (246 aa).

The active-site Nucleophile is Ser46. The active-site Proton donor is Asp201. The active-site Proton acceptor is His204.

It belongs to the 'GDSL' lipolytic enzyme family. IAH1 subfamily.

It is found in the cytoplasm. It carries out the reaction 3-methylbutyl acetate + H2O = 3-methylbutanol + acetate + H(+). The polypeptide is Isoamyl acetate-hydrolyzing esterase (iah1) (Schizosaccharomyces pombe (strain 972 / ATCC 24843) (Fission yeast)).